Reading from the N-terminus, the 257-residue chain is High affinity immunoglobulin epsilon receptor subunit alpha (257 aa).

The first 25 residues, Met1–Ala25, serve as a signal peptide directing secretion. The Extracellular portion of the chain corresponds to Val26–Gln205. Ig-like domains follow at residues Pro30–Ser110 and Asp111–Thr193. N-linked (GlcNAc...) asparagine glycosylation is found at Asn46, Asn67, Asn75, Asn99, Asn160, Asn165, and Asn191. The cysteines at positions 51 and 93 are disulfide-linked. A disulfide bond links Cys132 and Cys176. The helical transmembrane segment at Phe206–Ile224 threads the bilayer. Over Ser225–Asn257 the chain is Cytoplasmic.

In terms of assembly, tetramer of an alpha chain, a beta chain, and two disulfide linked gamma chains. Interacts with IGHE (via CH3 region). In terms of tissue distribution, expressed in eosinophils.

The protein resides in the cell membrane. Its function is as follows. High-affinity receptor for immunoglobulin epsilon/IgE. Mediates IgE effector functions in myeloid cells. Upon IgE binding and antigen/allergen cross-linking initiates signaling pathways that lead to myeloid cell activation and differentiation. On mast cells, basophils and eosinophils stimulates the secretion of vasoactive amines, lipid mediators and cytokines that contribute to inflammatory response, tissue remodeling and cytotoxicity against microbes. Triggers the immediate hypersensitivity response to allergens as a host defense mechanism against helminth parasites, pathogenic bacteria and venom toxicity. When dysregulated, it can elicit harmful life-threatening allergic and anaphylactic reactions. The chain is High affinity immunoglobulin epsilon receptor subunit alpha (FCER1A) from Homo sapiens (Human).